A 185-amino-acid chain; its full sequence is Imidazoleglycerol-phosphate dehydratase (185 aa).

This sequence belongs to the imidazoleglycerol-phosphate dehydratase family.

The protein resides in the cytoplasm. The catalysed reaction is D-erythro-1-(imidazol-4-yl)glycerol 3-phosphate = 3-(imidazol-4-yl)-2-oxopropyl phosphate + H2O. It participates in amino-acid biosynthesis; L-histidine biosynthesis; L-histidine from 5-phospho-alpha-D-ribose 1-diphosphate: step 6/9. The protein is Imidazoleglycerol-phosphate dehydratase of Pyrobaculum arsenaticum (strain DSM 13514 / JCM 11321 / PZ6).